Reading from the N-terminus, the 421-residue chain is UDP-N-acetylglucosamine 1-carboxyvinyltransferase (421 aa).

22 to 23 (KN) is a phosphoenolpyruvate binding site. R92 is a UDP-N-acetyl-alpha-D-glucosamine binding site. C116 functions as the Proton donor in the catalytic mechanism. A 2-(S-cysteinyl)pyruvic acid O-phosphothioketal modification is found at C116. Residues 121–125 (RPVDQ), D308, and I330 contribute to the UDP-N-acetyl-alpha-D-glucosamine site.

The protein belongs to the EPSP synthase family. MurA subfamily.

It is found in the cytoplasm. The catalysed reaction is phosphoenolpyruvate + UDP-N-acetyl-alpha-D-glucosamine = UDP-N-acetyl-3-O-(1-carboxyvinyl)-alpha-D-glucosamine + phosphate. It functions in the pathway cell wall biogenesis; peptidoglycan biosynthesis. Functionally, cell wall formation. Adds enolpyruvyl to UDP-N-acetylglucosamine. This is UDP-N-acetylglucosamine 1-carboxyvinyltransferase from Ralstonia nicotianae (strain ATCC BAA-1114 / GMI1000) (Ralstonia solanacearum).